The sequence spans 60 residues: Large ribosomal subunit protein uL30 (60 aa).

This sequence belongs to the universal ribosomal protein uL30 family. Part of the 50S ribosomal subunit.

This chain is Large ribosomal subunit protein uL30, found in Symbiobacterium thermophilum (strain DSM 24528 / JCM 14929 / IAM 14863 / T).